Here is a 1013-residue protein sequence, read N- to C-terminus: GPI ethanolamine phosphate transferase 3 (1013 aa).

A helical membrane pass occupies residues 41–61 (TLYIFLYSALAALQFIAIAFF). Asn184, Asn205, Asn336, Asn399, and Asn423 each carry an N-linked (GlcNAc...) asparagine glycan. 3 consecutive transmembrane segments (helical) span residues 447–467 (YYSIGTGIILLIISLAMLITI), 484–504 (VPTIIVMPLVSNVCFLGVFYV), and 515–535 (LWASLLATAVGIIIGFYVPIF). N-linked (GlcNAc...) asparagine glycosylation is present at Asn539. 4 helical membrane passes run 558-578 (VAAFLITLHALIFTSNSFTIW), 582-602 (IVSFSLTTLGMLTLYEFVFLP), 643-663 (IVGGYHSIVLIVCTRLASLIT), and 682-702 (NYSFSVMLGCLFLVFATPACI). A glycan (N-linked (GlcNAc...) asparagine) is linked at Asn707. The chain crosses the membrane as a helical span at residues 715–735 (AAPIWIGMLMKSILFVNFIYW). Asn742, Asn750, and Asn755 each carry an N-linked (GlcNAc...) asparagine glycan. 7 helical membrane-spanning segments follow: residues 761–781 (IVVGVSLVAANIGWMMGPLCI), 802–822 (NAYGAQYFLLVINFFMCILLF), 825–845 (PLAQLSLFLMCNQLLSILEIF), 868–888 (FFSTGHQATIPAVQWDMGFIL), 899–919 (LGIVLNTFGPHILCGISVALL), 943–963 (GMLLIYQTVLCLSTFIWVTNF), and 977–997 (FMFAALSLIVTQLVLTFITIA).

The protein belongs to the PIGG/PIGN/PIGO family. PIGO subfamily.

The protein resides in the endoplasmic reticulum membrane. It functions in the pathway glycolipid biosynthesis; glycosylphosphatidylinositol-anchor biosynthesis. Functionally, involved in glycosylphosphatidylinositol-anchor biosynthesis. Transfers ethanolamine phosphate to the GPI third mannose which links the GPI-anchor to the C-terminus of the proteins by an amide bond. Involved in cell wall biosynthesis. The chain is GPI ethanolamine phosphate transferase 3 (GPI13) from Eremothecium gossypii (strain ATCC 10895 / CBS 109.51 / FGSC 9923 / NRRL Y-1056) (Yeast).